The sequence spans 201 residues: Holliday junction branch migration complex subunit RuvA (201 aa).

The interval 1–64 (MYEYIKGKYI…QDFIGLYGFL (64 aa)) is domain I. The domain II stretch occupies residues 65-143 (TKDELEMFNK…STDISKGNSE (79 aa)). Residues 144 to 154 (INNLDVDYDEH) form a flexible linker region. The interval 154–201 (HSKKLEEVRFALNSLGYSEKETDRAINNVDKSEGIENIIKSCLRFLMN) is domain III.

This sequence belongs to the RuvA family. As to quaternary structure, homotetramer. Forms an RuvA(8)-RuvB(12)-Holliday junction (HJ) complex. HJ DNA is sandwiched between 2 RuvA tetramers; dsDNA enters through RuvA and exits via RuvB. An RuvB hexamer assembles on each DNA strand where it exits the tetramer. Each RuvB hexamer is contacted by two RuvA subunits (via domain III) on 2 adjacent RuvB subunits; this complex drives branch migration. In the full resolvosome a probable DNA-RuvA(4)-RuvB(12)-RuvC(2) complex forms which resolves the HJ.

The protein localises to the cytoplasm. Functionally, the RuvA-RuvB-RuvC complex processes Holliday junction (HJ) DNA during genetic recombination and DNA repair, while the RuvA-RuvB complex plays an important role in the rescue of blocked DNA replication forks via replication fork reversal (RFR). RuvA specifically binds to HJ cruciform DNA, conferring on it an open structure. The RuvB hexamer acts as an ATP-dependent pump, pulling dsDNA into and through the RuvAB complex. HJ branch migration allows RuvC to scan DNA until it finds its consensus sequence, where it cleaves and resolves the cruciform DNA. The chain is Holliday junction branch migration complex subunit RuvA from Clostridium acetobutylicum (strain ATCC 824 / DSM 792 / JCM 1419 / IAM 19013 / LMG 5710 / NBRC 13948 / NRRL B-527 / VKM B-1787 / 2291 / W).